The following is a 188-amino-acid chain: Pyridoxal 5'-phosphate synthase subunit PdxT (188 aa).

Position 46–48 (46–48 (GES)) interacts with L-glutamine. Cys78 functions as the Nucleophile in the catalytic mechanism. L-glutamine contacts are provided by residues Arg106 and 132–133 (IR). Residues His169 and Glu171 each act as charge relay system in the active site.

Belongs to the glutaminase PdxT/SNO family. In terms of assembly, in the presence of PdxS, forms a dodecamer of heterodimers. Only shows activity in the heterodimer.

The catalysed reaction is aldehydo-D-ribose 5-phosphate + D-glyceraldehyde 3-phosphate + L-glutamine = pyridoxal 5'-phosphate + L-glutamate + phosphate + 3 H2O + H(+). It catalyses the reaction L-glutamine + H2O = L-glutamate + NH4(+). It functions in the pathway cofactor biosynthesis; pyridoxal 5'-phosphate biosynthesis. In terms of biological role, catalyzes the hydrolysis of glutamine to glutamate and ammonia as part of the biosynthesis of pyridoxal 5'-phosphate. The resulting ammonia molecule is channeled to the active site of PdxS. In Tropheryma whipplei (strain Twist) (Whipple's bacillus), this protein is Pyridoxal 5'-phosphate synthase subunit PdxT.